The following is a 350-amino-acid chain: S-adenosylmethionine:tRNA ribosyltransferase-isomerase (350 aa).

Belongs to the QueA family. As to quaternary structure, monomer.

The protein localises to the cytoplasm. It catalyses the reaction 7-aminomethyl-7-carbaguanosine(34) in tRNA + S-adenosyl-L-methionine = epoxyqueuosine(34) in tRNA + adenine + L-methionine + 2 H(+). It participates in tRNA modification; tRNA-queuosine biosynthesis. In terms of biological role, transfers and isomerizes the ribose moiety from AdoMet to the 7-aminomethyl group of 7-deazaguanine (preQ1-tRNA) to give epoxyqueuosine (oQ-tRNA). In Vibrio parahaemolyticus serotype O3:K6 (strain RIMD 2210633), this protein is S-adenosylmethionine:tRNA ribosyltransferase-isomerase.